A 135-amino-acid chain; its full sequence is Small ribosomal subunit protein uS9 (135 aa).

This sequence belongs to the universal ribosomal protein uS9 family.

In Archaeoglobus fulgidus (strain ATCC 49558 / DSM 4304 / JCM 9628 / NBRC 100126 / VC-16), this protein is Small ribosomal subunit protein uS9 (rps9).